Consider the following 286-residue polypeptide: 4-hydroxybenzoate octaprenyltransferase (286 aa).

Helical transmembrane passes span 21–40 (GTLL…AGGM), 95–115 (ILFV…NGLV), 142–162 (FLGV…TGEV), 167–187 (WWLF…YAMV), 211–231 (IIGL…WSAE), 235–255 (LYGL…MLIF), and 266–286 (FLNN…DYLI).

It belongs to the UbiA prenyltransferase family. Requires Mg(2+) as cofactor.

It localises to the cell inner membrane. It carries out the reaction all-trans-octaprenyl diphosphate + 4-hydroxybenzoate = 4-hydroxy-3-(all-trans-octaprenyl)benzoate + diphosphate. The protein operates within cofactor biosynthesis; ubiquinone biosynthesis. Catalyzes the prenylation of para-hydroxybenzoate (PHB) with an all-trans polyprenyl group. Mediates the second step in the final reaction sequence of ubiquinone-8 (UQ-8) biosynthesis, which is the condensation of the polyisoprenoid side chain with PHB, generating the first membrane-bound Q intermediate 3-octaprenyl-4-hydroxybenzoate. This is 4-hydroxybenzoate octaprenyltransferase from Shewanella putrefaciens (strain CN-32 / ATCC BAA-453).